The sequence spans 230 residues: Orotidine 5'-phosphate decarboxylase (230 aa).

Residues Asp10, Lys32, 59-68 (DLKYHDIPNT), Thr119, Arg180, Gln189, Gly209, and Arg210 contribute to the substrate site. The active-site Proton donor is the Lys61.

Belongs to the OMP decarboxylase family. Type 1 subfamily. In terms of assembly, homodimer.

It catalyses the reaction orotidine 5'-phosphate + H(+) = UMP + CO2. Its pathway is pyrimidine metabolism; UMP biosynthesis via de novo pathway; UMP from orotate: step 2/2. In terms of biological role, catalyzes the decarboxylation of orotidine 5'-monophosphate (OMP) to uridine 5'-monophosphate (UMP). The chain is Orotidine 5'-phosphate decarboxylase from Haemophilus influenzae (strain ATCC 51907 / DSM 11121 / KW20 / Rd).